Reading from the N-terminus, the 583-residue chain is Isocitrate dehydrogenase kinase/phosphatase (583 aa).

ATP contacts are provided by residues 315–321 (APGIRGM) and Lys336. Residue Asp371 is part of the active site.

This sequence belongs to the AceK family.

Its subcellular location is the cytoplasm. The enzyme catalyses L-seryl-[isocitrate dehydrogenase] + ATP = O-phospho-L-seryl-[isocitrate dehydrogenase] + ADP + H(+). Its function is as follows. Bifunctional enzyme which can phosphorylate or dephosphorylate isocitrate dehydrogenase (IDH) on a specific serine residue. This is a regulatory mechanism which enables bacteria to bypass the Krebs cycle via the glyoxylate shunt in response to the source of carbon. When bacteria are grown on glucose, IDH is fully active and unphosphorylated, but when grown on acetate or ethanol, the activity of IDH declines drastically concomitant with its phosphorylation. The sequence is that of Isocitrate dehydrogenase kinase/phosphatase from Salmonella gallinarum (strain 287/91 / NCTC 13346).